Reading from the N-terminus, the 116-residue chain is Ribosome-binding factor A (116 aa).

The protein belongs to the RbfA family. In terms of assembly, monomer. Binds 30S ribosomal subunits, but not 50S ribosomal subunits or 70S ribosomes.

The protein resides in the cytoplasm. One of several proteins that assist in the late maturation steps of the functional core of the 30S ribosomal subunit. Associates with free 30S ribosomal subunits (but not with 30S subunits that are part of 70S ribosomes or polysomes). Required for efficient processing of 16S rRNA. May interact with the 5'-terminal helix region of 16S rRNA. This is Ribosome-binding factor A from Clostridium perfringens (strain 13 / Type A).